The chain runs to 404 residues: Plasma serine protease inhibitor (404 aa).

The N-terminal stretch at 1–19 (MRLCLFLCLVLLGPRMATL) is a signal peptide. Residues 20-24 (RRSQK) constitute a propeptide, removed in mature form. O-linked (GalNAc...) threonine glycans are attached at residues Thr35 and Thr36. Asn245, Asn258, and Asn334 each carry an N-linked (GlcNAc...) asparagine glycan.

Belongs to the serpin family. As to quaternary structure, forms protease inhibiting heterodimers in extracellular body fluids with serine proteases such as activated protein C/coagulation factor V/F5, acrosin/ACR, chymotrypsinogen B/CTRB1, prothrombin/F2, factor Xa/F10, factor XI/F11, kallikrein/KLKB1, tissue kallikrein, trypsin/PRSS1, prostate specific antigen/KLK3, tissue plasminogen activator/PLAT and urinary plasminogen activator/PLAU. Forms membrane-anchored serine proteases inhibiting heterodimers with TMPRSS7 and TMPRSS11E. Interacts with SEMG2. Post-translationally, N-glycosylated; glycans consist of a mixture of sialylated bi- (including sialyl-Lewis X epitopes), tri- and tetra-antennary complex-type chains; affects the maximal heparin- and thrombomodulin-enhanced rates of thrombin inhibition. O-glycosylated; further modified with 2 sialic acid residues. Proteolytically cleaved at the N-terminus; inhibits slightly the heparin- and thrombomodulin-enhanced rates of thrombin inhibition. N- and O-glycosylated. Proteolytically cleaved. Inhibition of proteases is accompanied by formation of a stable enzyme-inhibitor complex and by degradation of the serpin to lower molecular weight derivatives. Expressed strongly in the liver, and moderately in the kidney and testis, but not in other tissues tested.

Its subcellular location is the secreted. It localises to the extracellular space. With respect to regulation, its inhibitory activity is greatly enhanced in the presence of glycosaminoglycans, heparin, thrombomodulin and phospholipids vesicles. Heparin-dependent serine protease inhibitor acting in body fluids and secretions. Inactivates serine proteases by binding irreversibly to their serine activation site. Involved in the regulation of intravascular and extravascular proteolytic activities. Plays hemostatic roles in the blood plasma. Acts as a procoagulant and pro-inflammatory factor by inhibiting the anticoagulant activated protein C factor as well as the generation of activated protein C factor by the thrombin/thrombomodulin complex. Acts as an anticoagulant factor by inhibiting blood coagulation factors like prothrombin, factor XI, factor Xa, plasma kallikrein and fibrinolytic enzymes such as tissue- and urinary-type plasminogen activators. In seminal plasma, inactivates several serine proteases implicated in the reproductive system. Inhibits the serpin acrosin; indirectly protects component of the male genital tract from being degraded by excessive released acrosin. Inhibits tissue- and urinary-type plasminogen activator, prostate-specific antigen and kallikrein activities; has a control on the sperm motility and fertilization. Inhibits the activated protein C-catalyzed degradation of SEMG1 and SEMG2; regulates the degradation of semenogelin during the process of transfer of spermatozoa from the male reproductive tract into the female tract. In urine, inhibits urinary-type plasminogen activator and kallikrein activities. Inactivates membrane-anchored serine proteases activities such as MPRSS7 and TMPRSS11E. Inhibits urinary-type plasminogen activator-dependent tumor cell invasion and metastasis. May also play a non-inhibitory role in seminal plasma and urine as a hydrophobic hormone carrier by its binding to retinoic acid. This chain is Plasma serine protease inhibitor (SERPINA5), found in Bos taurus (Bovine).